A 133-amino-acid chain; its full sequence is UPF0225 protein BPP1723 (133 aa).

It belongs to the UPF0225 family.

The chain is UPF0225 protein BPP1723 from Bordetella parapertussis (strain 12822 / ATCC BAA-587 / NCTC 13253).